Reading from the N-terminus, the 43-residue chain is Protein PsbN (43 aa).

A helical membrane pass occupies residues 7 to 27 (LIVFIASLLLGVTGYSVYTAF).

It belongs to the PsbN family.

It localises to the plastid. The protein localises to the chloroplast thylakoid membrane. In terms of biological role, may play a role in photosystem I and II biogenesis. The chain is Protein PsbN from Rhodomonas salina (Cryptomonas salina).